A 368-amino-acid polypeptide reads, in one-letter code: Interferon-stimulated 20 kDa exonuclease-like 2 (368 aa).

Disordered stretches follow at residues 33 to 107 and 127 to 187; these read FLEQ…APSK and PKTK…PTVP. Residues 42–54 are compositionally biased toward polar residues; the sequence is KKNQPPNKVSKLN. The segment covering 77–96 has biased composition (basic and acidic residues); that stretch reads KKKEAAASKRDSERSKDKKA. The span at 131–145 shows a compositional bias: basic residues; that stretch reads STQKKGSKKKSLKKK. The region spanning 194-368 is the Exonuclease domain; the sequence is MVAIDCEMVG…QHLAQNPPEN (175 aa).

It is found in the nucleus. It localises to the nucleolus. Functionally, 3'-&gt; 5'-exoribonuclease involved in ribosome biogenesis in the processing of the 12S pre-rRNA. Displays a strong specificity for a 3'-end containing a free hydroxyl group. This chain is Interferon-stimulated 20 kDa exonuclease-like 2 (Isg20l2), found in Mus musculus (Mouse).